Consider the following 213-residue polypeptide: Probable glutathione S-transferase DHAR1, cytosolic (213 aa).

Glutathione contacts are provided by K8 and D19. Positions 8 and 19 each coordinate L-ascorbate. Residues 10 to 89 (AVGHPDTLGD…VIEEKYPTPS (80 aa)) enclose the GST N-terminal domain. Residue C20 is the Nucleophile of the active site. Glutathione is bound by residues K47, V60, S74, H160, and W207. One can recognise a GST C-terminal domain in the interval 73-213 (DSDVITQVIE…IAGWAPKVNA (141 aa)). K210 is a binding site for L-ascorbate.

It belongs to the GST superfamily. DHAR family. In terms of assembly, monomer.

It localises to the cytoplasm. The protein localises to the cytosol. The enzyme catalyses RX + glutathione = an S-substituted glutathione + a halide anion + H(+). It catalyses the reaction L-dehydroascorbate + 2 glutathione = glutathione disulfide + L-ascorbate. In terms of biological role, involved in ascorbate homeostasis. Maintains redox pools of ascorbate by recycling dihydroascorbate (DHA) to ascorbate. Involved in scavenging reactive oxygen species (ROS) under oxidative stresses. Possesses dehydroascorbate reductase (DHAR) activity in vitro. May function via a ping-pong reaction mechanism with an electron transfer at the active site. Possesses chaperone-like activity in vitro. The protein is Probable glutathione S-transferase DHAR1, cytosolic of Oryza sativa subsp. japonica (Rice).